The following is a 155-amino-acid chain: Deoxyuridine 5'-triphosphate nucleotidohydrolase (155 aa).

Substrate is bound by residues 74–76 (RSG), asparagine 87, and 91–93 (TID).

This sequence belongs to the dUTPase family. Mg(2+) is required as a cofactor.

It catalyses the reaction dUTP + H2O = dUMP + diphosphate + H(+). It functions in the pathway pyrimidine metabolism; dUMP biosynthesis; dUMP from dCTP (dUTP route): step 2/2. This enzyme is involved in nucleotide metabolism: it produces dUMP, the immediate precursor of thymidine nucleotides and it decreases the intracellular concentration of dUTP so that uracil cannot be incorporated into DNA. This is Deoxyuridine 5'-triphosphate nucleotidohydrolase from Cereibacter sphaeroides (strain ATCC 17023 / DSM 158 / JCM 6121 / CCUG 31486 / LMG 2827 / NBRC 12203 / NCIMB 8253 / ATH 2.4.1.) (Rhodobacter sphaeroides).